A 481-amino-acid chain; its full sequence is Serine/threonine-protein kinase US3 (481 aa).

A disordered region spans residues R12–E63. Residues P47–P61 show a composition bias toward pro residues. One can recognise a Protein kinase domain in the interval F191–F478. ATP contacts are provided by residues L197–V205 and K220. Residue D305 is the Proton acceptor of the active site.

Belongs to the protein kinase superfamily. Ser/Thr protein kinase family. As to quaternary structure, interacts with host LAT; this interaction prevents LAT activation of TRAF6. Post-translationally, phosphorylated by UL13; this phosphorylation regulates subsequent phosphorylation of UL31 and UL34 by US3. Autophosphorylated.

It is found in the host cytoplasm. Its subcellular location is the host nucleus. The enzyme catalyses L-seryl-[protein] + ATP = O-phospho-L-seryl-[protein] + ADP + H(+). It carries out the reaction L-threonyl-[protein] + ATP = O-phospho-L-threonyl-[protein] + ADP + H(+). Its function is as follows. Multifunctional serine/threonine kinase that plays a role in several processes including egress of virus particles from the nucleus, modulation of the actin cytoskeleton and inhibition of host immune response. Phosphorylates UL31 and UL34, two critical regulators of capsid budding from nucleus to endoplasmic reticulum, thereby facilitating virion egress. Modulates and redistributes host components of the nuclear envelope, including LMNA, emerin/EMD and the nuclear matrix protein MATR3. In turn, facilitates nuclear pore impairment and capsid release through impaired nuclear envelope. Phosphorylates envelope glycoprotein B (gB), probably to direct it to the cell surface. Promotes virus intracellular spread by restructuring host cell cytoskeleton. Blocks host apoptosis to extend cell survival and allow efficient viral replication. Promotes viral gene expression by phosphorylating host HDAC2 to reduce viral genome silencing. Strongly inhibits TCR-activated signal transduction in T-cells by reducing the ubiquitination of LAT and TRAF6, leading to a suboptimal activation of LAT. Subverts host antiviral innate immunity by inhibiting type I interferon production through hyperphosphorylation of beta-catenin/CTNNB1. In addition, phosphorylates the RNA sensor RIGI and the transcription factor IRF3 to prevent the RLR-mediated antiviral signaling pathway. Hyperphosphorylates host RELA and thereby dampens NF-kappa-B signaling. Acts as an immunoevasin partly responsible for inhibition of MR1 expression and antigen presentation in response to bacterial infection. In Human herpesvirus 2 (strain HG52) (HHV-2), this protein is Serine/threonine-protein kinase US3 (US3).